We begin with the raw amino-acid sequence, 549 residues long: Arginine--tRNA ligase (549 aa).

The 'HIGH' region motif lies at 132–142 (ANPTGPLHIGH).

Belongs to the class-I aminoacyl-tRNA synthetase family. In terms of assembly, monomer.

The protein resides in the cytoplasm. The enzyme catalyses tRNA(Arg) + L-arginine + ATP = L-arginyl-tRNA(Arg) + AMP + diphosphate. The chain is Arginine--tRNA ligase from Paenarthrobacter aurescens (strain TC1).